The primary structure comprises 154 residues: uncharacterized protein (154 aa).

One can recognise a HotDog ACOT-type domain in the interval serine 13–asparagine 128.

It belongs to the acyl coenzyme A hydrolase family.

This is an uncharacterized protein from Haemophilus influenzae (strain ATCC 51907 / DSM 11121 / KW20 / Rd).